Consider the following 305-residue polypeptide: GMP synthase [glutamine-hydrolyzing] subunit B (305 aa).

A GMPS ATP-PPase domain is found at 2-184 (VNIEKFIDQA…LGLPAEIQHR (183 aa)). 29 to 35 (SGGVDSS) provides a ligand contact to ATP.

In terms of assembly, heterodimer composed of a glutamine amidotransferase subunit (A) and a GMP-binding subunit (B).

It carries out the reaction XMP + L-glutamine + ATP + H2O = GMP + L-glutamate + AMP + diphosphate + 2 H(+). It participates in purine metabolism; GMP biosynthesis; GMP from XMP (L-Gln route): step 1/1. Catalyzes the synthesis of GMP from XMP. The polypeptide is GMP synthase [glutamine-hydrolyzing] subunit B (Methanoculleus marisnigri (strain ATCC 35101 / DSM 1498 / JR1)).